Reading from the N-terminus, the 456-residue chain is tRNA modification GTPase MnmE (456 aa).

(6S)-5-formyl-5,6,7,8-tetrahydrofolate contacts are provided by arginine 23, glutamate 85, and arginine 124. Residues 220–375 (GLRVLIFGKP…LVSAIQERFV (156 aa)) form the TrmE-type G domain. Asparagine 230 contacts K(+). GTP-binding positions include 230-235 (NVGKSS), 249-255 (TDIPGTT), and 274-277 (DTAG). Serine 234 lines the Mg(2+) pocket. 3 residues coordinate K(+): threonine 249, isoleucine 251, and threonine 254. Threonine 255 contacts Mg(2+). Lysine 456 contributes to the (6S)-5-formyl-5,6,7,8-tetrahydrofolate binding site.

The protein belongs to the TRAFAC class TrmE-Era-EngA-EngB-Septin-like GTPase superfamily. TrmE GTPase family. In terms of assembly, homodimer. Heterotetramer of two MnmE and two MnmG subunits. The cofactor is K(+).

It is found in the cytoplasm. In terms of biological role, exhibits a very high intrinsic GTPase hydrolysis rate. Involved in the addition of a carboxymethylaminomethyl (cmnm) group at the wobble position (U34) of certain tRNAs, forming tRNA-cmnm(5)s(2)U34. The polypeptide is tRNA modification GTPase MnmE (Syntrophotalea carbinolica (strain DSM 2380 / NBRC 103641 / GraBd1) (Pelobacter carbinolicus)).